We begin with the raw amino-acid sequence, 124 residues long: Small ribosomal subunit protein uS12 (124 aa).

A 3-methylthioaspartic acid modification is found at Asp90.

Belongs to the universal ribosomal protein uS12 family. In terms of assembly, part of the 30S ribosomal subunit. Contacts proteins S8 and S17. May interact with IF1 in the 30S initiation complex.

In terms of biological role, with S4 and S5 plays an important role in translational accuracy. Its function is as follows. Interacts with and stabilizes bases of the 16S rRNA that are involved in tRNA selection in the A site and with the mRNA backbone. Located at the interface of the 30S and 50S subunits, it traverses the body of the 30S subunit contacting proteins on the other side and probably holding the rRNA structure together. The combined cluster of proteins S8, S12 and S17 appears to hold together the shoulder and platform of the 30S subunit. The chain is Small ribosomal subunit protein uS12 from Wolbachia pipientis subsp. Culex pipiens (strain wPip).